The sequence spans 230 residues: Large ribosomal subunit protein uL1 (230 aa).

It belongs to the universal ribosomal protein uL1 family. Part of the 50S ribosomal subunit.

In terms of biological role, binds directly to 23S rRNA. The L1 stalk is quite mobile in the ribosome, and is involved in E site tRNA release. Protein L1 is also a translational repressor protein, it controls the translation of the L11 operon by binding to its mRNA. The protein is Large ribosomal subunit protein uL1 of Chromohalobacter salexigens (strain ATCC BAA-138 / DSM 3043 / CIP 106854 / NCIMB 13768 / 1H11).